A 219-amino-acid polypeptide reads, in one-letter code: RING-H2 finger protein ATL78 (219 aa).

The chain crosses the membrane as a helical span at residues 57–77 (VMVLSVLLCALVCSLGLNSII). An RING-type; atypical zinc finger spans residues 131–173 (CAICLSEFVAEERVKLLPTCHHGFHVRCIDKWLSSHSSCPTCR).

Belongs to the RING-type zinc finger family. ATL subfamily.

It is found in the membrane. It catalyses the reaction S-ubiquitinyl-[E2 ubiquitin-conjugating enzyme]-L-cysteine + [acceptor protein]-L-lysine = [E2 ubiquitin-conjugating enzyme]-L-cysteine + N(6)-ubiquitinyl-[acceptor protein]-L-lysine.. It functions in the pathway protein modification; protein ubiquitination. The protein is RING-H2 finger protein ATL78 (ATL78) of Arabidopsis thaliana (Mouse-ear cress).